The following is a 582-amino-acid chain: Mitogen-activated protein kinase 17 (582 aa).

A disordered region spans residues 22 to 61; that stretch reads SSSFHLTTTGDDTVKDLHDPRREDAEGDGWEEVHEGPESD. The span at 33–45 shows a compositional bias: basic and acidic residues; the sequence is DTVKDLHDPRRED. In terms of domain architecture, Protein kinase spans 105–396; sequence YKVSEVIGKG…AEEALTDPYF (292 aa). ATP-binding positions include 111–119 and K134; that span reads IGKGSYGVV. The Proton acceptor role is filled by D231. T267 bears the Phosphothreonine mark. Residues 267–269 carry the TXY motif; that stretch reads TDY. Y269 is subject to Phosphotyrosine. 2 disordered regions span residues 474–502 and 542–582; these read EGVS…GNKH and ISAS…QLKT. Residues 482 to 491 show a composition bias toward polar residues; sequence SSPQLRQNAS. Positions 493–502 are enriched in basic and acidic residues; that stretch reads PRERAIGNKH. Positions 557 to 572 are enriched in acidic residues; that stretch reads DQEDSLTESMDETADE.

Belongs to the protein kinase superfamily. CMGC Ser/Thr protein kinase family. MAP kinase subfamily. Dually phosphorylated on Thr-267 and Tyr-269, which activates the enzyme.

It carries out the reaction L-seryl-[protein] + ATP = O-phospho-L-seryl-[protein] + ADP + H(+). It catalyses the reaction L-threonyl-[protein] + ATP = O-phospho-L-threonyl-[protein] + ADP + H(+). Its activity is regulated as follows. Activated by threonine and tyrosine phosphorylation. The chain is Mitogen-activated protein kinase 17 (MPK17) from Oryza sativa subsp. japonica (Rice).